Reading from the N-terminus, the 157-residue chain is Ubiquitin-like protein 4A (157 aa).

One can recognise a Ubiquitin-like domain in the interval methionine 1 to lysine 76. A Glycyl lysine isopeptide (Lys-Gly) (interchain with G-Cter in ubiquitin) cross-link involves residue lysine 48. Serine 90 carries the post-translational modification Phosphoserine. Positions tryptophan 96 to leucine 138 are required and sufficient for interaction with BAG6.

Component of the BAG6/BAT3 complex, at least composed of BAG6, UBL4A and GET4/TRC35. Interacts with BAG6; the interaction is direct and required for UBL4A protein stability. Interacts with USP13; may be indirect via BAG6. In terms of processing, polyubiquitinated. Ubiquitination by AMFR and deubiquitination by USP13 may regulate the interaction between the BAG6/BAT complex and SGTA and therefore may regulate client proteins fate.

The protein resides in the cytoplasm. It localises to the cytosol. It is found in the nucleus. In terms of biological role, as part of a cytosolic protein quality control complex, the BAG6/BAT3 complex, maintains misfolded and hydrophobic patches-containing proteins in a soluble state and participates in their proper delivery to the endoplasmic reticulum or alternatively can promote their sorting to the proteasome where they undergo degradation. The BAG6/BAT3 complex is involved in the post-translational delivery of tail-anchored/type II transmembrane proteins to the endoplasmic reticulum membrane. Recruited to ribosomes, it interacts with the transmembrane region of newly synthesized tail-anchored proteins and together with SGTA and ASNA1 mediates their delivery to the endoplasmic reticulum. Client proteins that cannot be properly delivered to the endoplasmic reticulum are ubiquitinated and sorted to the proteasome. Similarly, the BAG6/BAT3 complex also functions as a sorting platform for proteins of the secretory pathway that are mislocalized to the cytosol either delivering them to the proteasome for degradation or to the endoplasmic reticulum. The BAG6/BAT3 complex also plays a role in the endoplasmic reticulum-associated degradation (ERAD), a quality control mechanism that eliminates unwanted proteins of the endoplasmic reticulum through their retrotranslocation to the cytosol and their targeting to the proteasome. It maintains these retrotranslocated proteins in an unfolded yet soluble state condition in the cytosol to ensure their proper delivery to the proteasome. This is Ubiquitin-like protein 4A (UBL4A) from Callithrix jacchus (White-tufted-ear marmoset).